The primary structure comprises 276 residues: NH(3)-dependent NAD(+) synthetase (276 aa).

43–50 lines the ATP pocket; that stretch reads GISGGVDS. Aspartate 49 contributes to the Mg(2+) binding site. Deamido-NAD(+) is bound at residue arginine 146. Threonine 166 contributes to the ATP binding site. Glutamate 171 is a Mg(2+) binding site. Lysine 179 and aspartate 186 together coordinate deamido-NAD(+). ATP-binding residues include lysine 195 and threonine 217. Deamido-NAD(+) is bound at residue 266-267; sequence HK.

It belongs to the NAD synthetase family. Homodimer.

The enzyme catalyses deamido-NAD(+) + NH4(+) + ATP = AMP + diphosphate + NAD(+) + H(+). It participates in cofactor biosynthesis; NAD(+) biosynthesis; NAD(+) from deamido-NAD(+) (ammonia route): step 1/1. Functionally, catalyzes the ATP-dependent amidation of deamido-NAD to form NAD. Uses ammonia as a nitrogen source. This chain is NH(3)-dependent NAD(+) synthetase, found in Shewanella piezotolerans (strain WP3 / JCM 13877).